A 421-amino-acid polypeptide reads, in one-letter code: Testin (421 aa).

The PET domain maps to 92 to 199 (MILTNPVAAK…GDVKLPCEMD (108 aa)). Residues 133–164 (EKQPVAGSEGAQYRKKQLAKQLPAHDQDPSKC) form a disordered region. The segment covering 155 to 164 (PAHDQDPSKC) has biased composition (basic and acidic residues). 3 LIM zinc-binding domains span residues 234–297 (YSCY…CDSE), 299–359 (PRCA…NHAV), and 362–421 (QGCH…KMMS).

The protein belongs to the prickle / espinas / testin family. As to quaternary structure, interacts via LIM domain 1 with ZYX. Interacts (via LIM domain 3) with ENAH and VASP. Interacts with ALKBH4, talin, actin, alpha-actinin, GRIP1 and PXN. Interacts (via LIM domain 2) with ACTL7A (via N-terminus). Heterodimer with ACTL7A; the heterodimer interacts with ENAH to form a heterotrimer.

It is found in the cytoplasm. The protein resides in the cell junction. Its subcellular location is the focal adhesion. In terms of biological role, scaffold protein that may play a role in cell adhesion, cell spreading and in the reorganization of the actin cytoskeleton. Plays a role in the regulation of cell proliferation. May act as a tumor suppressor. The polypeptide is Testin (TES) (Saimiri boliviensis boliviensis (Bolivian squirrel monkey)).